A 508-amino-acid polypeptide reads, in one-letter code: MTLDVSRQDPRYNTLKHGFNLRWPSTDAQAAGRIALCEKADDVAPALQHIIDTGMRPTVRSGGHCYEDFVSNNPDGAIVDLSLLNAPEVRADGTVRIPAGTQNWNGYLELYKRHNLTLPGGSCYSVGAGGHICGGGYGLLSRLQGLTVDWLSAVDIVTVDRQGRAAPRTVDATRDPELFRACRGAGGGNFGIITAYTFARLPEAPREVALATVAFDWAAMTPERFAELLRLYGEYWETRGKDPDTWGMFSLLKLTHRSAGQIVMLTQFCNPDGTCRDLSVLNDFLARFRACAPVPLKGRPPGYGPAHRQGVGQLLCSKPHTVVRYDWLTATQTVNGSGPNQRGKYKSAYMKRGFTAREAQRIYTHLTRTVPGIDLSQSLLQVDSYGGAVNKTERIADTAVPQRASVMKLQYQTYWTSAADDAGHLRWIGDFYRDVYGTPDVSAPHAGTPYPGDRYEGCYINYPDVDMLAYPFWPQLYYGDGDLYAFLQRVKRRYDPNNIFHHAMSVRP.

The region spanning 26–203 is the FAD-binding PCMH-type domain; the sequence is TDAQAAGRIA…TAYTFARLPE (178 aa). Residues 64–123 constitute a cross-link (6-(S-cysteinyl)-8alpha-(pros-histidyl)-FAD (His-Cys)); the sequence is HCYEDFVSNNPDGAIVDLSLLNAPEVRADGTVRIPAGTQNWNGYLELYKRHNLTLPGGSC.

Belongs to the oxygen-dependent FAD-linked oxidoreductase family. Requires FAD as cofactor.

It catalyses the reaction N-acetyl-D-glucosamine + O2 + H2O = N-acetyl-D-glucosaminate + H2O2 + H(+). The catalysed reaction is N-acetyl-D-galactosamine + O2 + H2O = N-acetyl-D-galactosaminate + H2O2 + H(+). The enzyme catalyses N-acetyl-D-glucosamine + O2 = N-acetyl-D-glucosamino-1,5-lactone + H2O2. It carries out the reaction N-acetyl-D-galactosamine + O2 = N-acetyl-D-galactosamino-1,5-lactone + H2O2. Its function is as follows. Catalyzes the oxidation of a range of monosaccharides in vitro, displaying the highest activity with N-acetylglucosamine (GlcNAc) and N-acetylgalactosamine (GalNAc), with a reduction of O2 to H2O2. Acts upon the C1 carbon of the GlcNAc or GalNAc molecule, producing the corresponding lactone, which can spontaneously hydrolyze. Its biological function is unclear, but its main function might be connected to extracellular production of hydrogen peroxide to compete with other organisms through oxidative stress, or support the action of peroxidases and peroxygenases. The protein is N-acetyl-D-hexosamine oxidase of Ralstonia solanacearum (strain UW551).